The following is a 365-amino-acid chain: MIQTTVLHPKHLEAGAKMVDFHGWEMPINYGSQLEEHHQVRTDAGMFDVSHMTIVDLTGERVKAFLQHLLANDVAKLTVFGKALYSGMLTPEGGVIDDLITYYLGETFYRLVVNSATREKDLAWIRHHAQDFGVTVTERPELAMIAVQGSNAKAKAAKVFSAEQNAAVEGMKPFFGVQAGELFIATTGYTGEDGYEIVVPQEQACDLWQALLDNGVAPCGLGARDTLRLEAGMNLYGQDMDETVSPLAANMAWTIAWEPSDRQFIGRAALEAQKAAGSQPKLVGLVMEEKGVLRSGMPVTFTTAAGEEREGVITSGSFSPTLGYSIALARVPRDIGEQASVEIRKKLVTVKVTKPAFVRNGQKLV.

It belongs to the GcvT family. The glycine cleavage system is composed of four proteins: P, T, L and H.

The catalysed reaction is N(6)-[(R)-S(8)-aminomethyldihydrolipoyl]-L-lysyl-[protein] + (6S)-5,6,7,8-tetrahydrofolate = N(6)-[(R)-dihydrolipoyl]-L-lysyl-[protein] + (6R)-5,10-methylene-5,6,7,8-tetrahydrofolate + NH4(+). The glycine cleavage system catalyzes the degradation of glycine. The chain is Aminomethyltransferase from Aeromonas hydrophila subsp. hydrophila (strain ATCC 7966 / DSM 30187 / BCRC 13018 / CCUG 14551 / JCM 1027 / KCTC 2358 / NCIMB 9240 / NCTC 8049).